We begin with the raw amino-acid sequence, 315 residues long: O-antigen chain rhamnosyltransferase WbaN (315 aa).

This sequence belongs to the glycosyltransferase 2 family.

It catalyses the reaction alpha-D-galactosyl-di-trans,octa-cis-undecaprenyl diphosphate + dTDP-beta-L-rhamnose = alpha-L-rhamnosyl-(1-&gt;3)-alpha-D-galactosyl-1-diphospho-di-trans,octa-cis-undecaprenol + dTDP + H(+). Its pathway is bacterial outer membrane biogenesis; LPS O-antigen biosynthesis. Functionally, rhamnosyltransferase involved in the biosynthesis of the repeat unit of the lipopolysaccharide (LPS) O-antigen region. Catalyzes the addition of a rhamnose to the galactosyl-undecaprenyl diphosphate intermediate. This chain is O-antigen chain rhamnosyltransferase WbaN, found in Salmonella anatum.